Here is a 285-residue protein sequence, read N- to C-terminus: NADH-dependent oxidoreductase ucdB (285 aa).

Residue Thr87 coordinates NAD(+). Residue Lys156 is part of the active site.

Belongs to the HIBADH-related family. NP60 subfamily.

The protein operates within secondary metabolite biosynthesis. Its function is as follows. Nonribosomal peptide synthetase that mediates the biosynthesis of usterphenyllins and uscandidusins, p-terphenyl derivatives. Within the pathway, ucdB alone catalyzes both reduction and dehydration of atromentin to form a terphenyl triol intermediate. The pathway begin with the biosynthesis of 4-hydroxyphenylpyruvate (HPPA) from L-tyrosine, possibly by the aminotransferase ucdG. The nonribosomal peptide synthetase ucdA then condenses two HPPA units to produce atromentin. The key step in this pathway is the reduction and dehydration of atromentin to form a terphenyl triol intermediate, performed by the NAD-dependent dehydrogenase ucdB. Further O-methylation by the methyltransferase ucdC forms terphenyllin carrying two methoxy moieties at C-9 and C-12, and subsequent dihydroxylation at C-3 of ring A and C-15 of ring C by the flavin-dependent oxygenase ucdD leads to 3,15-dihydroxyterphenyllin. Prenylation by ucdE at position C-5 of ring A forms usterphenyllin B, and is followed by a second prenylation at position C-14 of ring C to form usterphenyllin A. The following furan ring formation that leads to uscandidusins A and B was proven to be an unexpected spontaneous non-enzymatic reaction. This Aspergillus ustus protein is NADH-dependent oxidoreductase ucdB.